A 169-amino-acid polypeptide reads, in one-letter code: Nucleoside diphosphate kinase 3 (169 aa).

6 residues coordinate ADP: Lys29, Arg105, Thr111, Arg122, Val129, and Asn132. The Pros-phosphohistidine intermediate role is filled by His135.

This sequence belongs to the NDK family. Homohexamer. Interacts (via its N-terminal region) with KAT5; this interaction enables recruitment of NME3 at DNA damage sites where it plays a role in the repair of DNA. Found in association with several ciliary nephronophthisis proteins, including NEK8, CEP164, ANKS6. Mg(2+) serves as cofactor.

The protein resides in the mitochondrion outer membrane. It is found in the cytoplasm. It localises to the cytoskeleton. Its subcellular location is the cilium basal body. The enzyme catalyses a 2'-deoxyribonucleoside 5'-diphosphate + ATP = a 2'-deoxyribonucleoside 5'-triphosphate + ADP. It carries out the reaction a ribonucleoside 5'-diphosphate + ATP = a ribonucleoside 5'-triphosphate + ADP. Catalyzes the phosphorylation of ribonucleosides and deoxyribonucleoside diphosphates, other than ATP, into the corresponding triphosphates with ATP as the major phosphate donor. The ATP gamma phosphate is transferred to the nucleoside diphosphate beta phosphate via a ping-pong mechanism, using a phosphorylated active-site intermediate. Through the catalyzed exchange of gamma-phosphate between di- and triphosphonucleosides participates in regulation of intracellular nucleotide homeostasis. Inhibits granulocyte differentiation. May be required for ciliary function during renal development. In terms of biological role, independently of its kinase activity, facilitates mitochondrial tethering prior to membrane fusion through its direct membrane-binding and hexamerization. Implicated in repair of both single- and double-stranded breaks in DNA through its association with the ribonucleotide reductase complex (RNR complex) via its interaction with the histone acetyltransferase KAT5, this interaction enables recruitment of NME3 at DNA damage sites where it plays a role in the repair of DNA, independently of its kinase activity. This chain is Nucleoside diphosphate kinase 3 (Nme3), found in Mus musculus (Mouse).